The chain runs to 179 residues: Protein TIFY 11a (179 aa).

The Tify domain occupies 62-97 (VDGGGQQFTIFYAGKVVVIDRCTPAMAAELMRFASA). The short motif at 115-140 (PIARKASLKRFLAKRKATPASARSSY) is the Jas element. Residues 117–124 (ARKASLKR) carry the Nuclear localization signal motif.

The protein belongs to the TIFY/JAZ family. In terms of assembly, interacts with BHLH148. Interacts with COI1A in a coronatine-dependent manner. Interacts with COI1B in a coronatine-dependent manner. Coronatine is an analog of jasmonoyl isoleucine (JA-Ile). Interacts with RSS3. Forms a ternary complex with RSS3 and BHLH094 in the nucleus. Interacts with BHLH062 and NINJA1. Interacts with MYB30. In terms of processing, ubiquitinated. Targeted for degradation by the SCF(COI1) E3 ubiquitin ligase-proteasome pathway during jasmonate signaling.

It is found in the nucleus. Repressor of jasmonate (JA) responses. Forms a ternary complex with RSS3 and BHLH94 to negatively regulate JA-responsive genes. Acts as a positive regulator of tolerance to salt stress. Involved in salt tolerance by modulating potassium homeostasis through JA signaling and regulation of the expression of potassium ion transporter genes. Acts as a transcriptional regulator targeted by the SCF(COI1) E3 ubiquitin ligase complexes in the JA signaling pathway, and interacts with BHLH062 that may directly regulate the ion transporter genes. Acts as a positive regulator of tolerance to dehydration stress. Acts as a negative regulator of tolerance to cold stress by interacting with MYB30. The sequence is that of Protein TIFY 11a from Oryza sativa subsp. japonica (Rice).